A 712-amino-acid polypeptide reads, in one-letter code: Polyphosphate kinase (712 aa).

Asn-49 contacts ATP. Mg(2+) is bound by residues Arg-398 and Arg-428. The active-site Phosphohistidine intermediate is the His-458. 3 residues coordinate ATP: Tyr-491, Arg-587, and His-615.

This sequence belongs to the polyphosphate kinase 1 (PPK1) family. Mg(2+) serves as cofactor. An intermediate of this reaction is the autophosphorylated ppk in which a phosphate is covalently linked to a histidine residue through a N-P bond.

The enzyme catalyses [phosphate](n) + ATP = [phosphate](n+1) + ADP. Catalyzes the reversible transfer of the terminal phosphate of ATP to form a long-chain polyphosphate (polyP). The polypeptide is Polyphosphate kinase (Prochlorococcus marinus (strain MIT 9313)).